The chain runs to 401 residues: MTSILTNVAAMAALQTLRGIDSNMEETQARVSSGLRVGTASDNAAYWSIATTMRSDNMALSAVQDALGLGAAKVDTAYAGMENAVEVVKEIRAKLVAATEDGVDKAKIQEEIEQLKQQLTSIATAASFSGENWLQADITTPVTKSVVGSFVRDSSGVVSVKTIDYVLDGNSVLFDTVGDAGILDKIYNVSQASVTLPVNVNGTTTEYTVAAYAVDELIAAGATFDGDSANVTGYTVPAGGIDYNGNFVKVEGTWVRAIDVAATGQEVVYDDGTTKWGVDTTVAGAPAINVVAPASIENIDITNAAQAANLDALIRGVDEALEDLISATSALGSISMRIGMQEEFVSKLTDSIDSGIGRLVDADMNEESTRLKALQTQQQLAIQSLSIANTNSENILQLFRQ.

The protein belongs to the bacterial flagellin family.

Its subcellular location is the secreted. The protein resides in the bacterial flagellum. In terms of biological role, flagellin is the subunit protein which polymerizes to form the filaments of bacterial flagella. The chain is Flagellin D (flaD) from Rhizobium meliloti (strain 1021) (Ensifer meliloti).